The sequence spans 338 residues: MTKMYYEEDTDLNLLKGKTIAVIGYGSQGHAHALNAKESGGNVIIGLYEGSKSWAKAEAQGFEVFSTAEAAKKADIIMILINDELQAAMYKKDIAPNLEAGNMLMFAHGFNIHFDQITAPNDVDVTMIAPKGPGHTVRSEYQLGKGVPCLVAVHQDATGRALETALAYANAIGGARAGVLETTFRTETETDLFGEQAVLCGGVCALMQAGFETLVEAGYDERNAYFECIHEMKLIVDLIYQSGFAGMRYSISNTAEYGDYITGSKIITEETKKTMKKVLKDIQDGTFAKDFLLDMSEAGGQAHFKAMRKLAAEHQSEAVGSEIRKLYCWNNEDKLINN.

The KARI N-terminal Rossmann domain occupies 2 to 182 (TKMYYEEDTD…GGARAGVLET (181 aa)). Residues 25-28 (YGSQ), S51, S53, and 83-86 (DELQ) each bind NADP(+). The active site involves H108. G134 lines the NADP(+) pocket. In terms of domain architecture, KARI C-terminal knotted spans 183–330 (TFRTETETDL…SEIRKLYCWN (148 aa)). Mg(2+) contacts are provided by D191, E195, E227, and E231. S252 is a binding site for substrate.

Belongs to the ketol-acid reductoisomerase family. It depends on Mg(2+) as a cofactor.

It catalyses the reaction (2R)-2,3-dihydroxy-3-methylbutanoate + NADP(+) = (2S)-2-acetolactate + NADPH + H(+). The enzyme catalyses (2R,3R)-2,3-dihydroxy-3-methylpentanoate + NADP(+) = (S)-2-ethyl-2-hydroxy-3-oxobutanoate + NADPH + H(+). It functions in the pathway amino-acid biosynthesis; L-isoleucine biosynthesis; L-isoleucine from 2-oxobutanoate: step 2/4. It participates in amino-acid biosynthesis; L-valine biosynthesis; L-valine from pyruvate: step 2/4. Its function is as follows. Involved in the biosynthesis of branched-chain amino acids (BCAA). Catalyzes an alkyl-migration followed by a ketol-acid reduction of (S)-2-acetolactate (S2AL) to yield (R)-2,3-dihydroxy-isovalerate. In the isomerase reaction, S2AL is rearranged via a Mg-dependent methyl migration to produce 3-hydroxy-3-methyl-2-ketobutyrate (HMKB). In the reductase reaction, this 2-ketoacid undergoes a metal-dependent reduction by NADPH to yield (R)-2,3-dihydroxy-isovalerate. The chain is Ketol-acid reductoisomerase (NADP(+)) from Clostridium botulinum (strain Eklund 17B / Type B).